We begin with the raw amino-acid sequence, 156 residues long: Small ribosomal subunit protein eS10 (156 aa).

Positions 91–156 (LKRQTRPEAA…FGRGRQEQEE (66 aa)) are disordered. Residues 95-119 (TRPEAARPRPKEGAPRAQVGEDRAG) show a composition bias toward basic and acidic residues.

This sequence belongs to the eukaryotic ribosomal protein eS10 family.

The protein resides in the cytoplasm. The protein is Small ribosomal subunit protein eS10 (RPS10) of Lumbricus rubellus (Humus earthworm).